The primary structure comprises 413 residues: Serine hydroxymethyltransferase (413 aa).

Residues Leu-117 and 121–123 each bind (6S)-5,6,7,8-tetrahydrofolate; that span reads GHL. Lys-226 carries the post-translational modification N6-(pyridoxal phosphate)lysine. (6S)-5,6,7,8-tetrahydrofolate-binding positions include Glu-239 and 349–351; that span reads SPF.

The protein belongs to the SHMT family. Homodimer. Pyridoxal 5'-phosphate serves as cofactor.

Its subcellular location is the cytoplasm. It catalyses the reaction (6R)-5,10-methylene-5,6,7,8-tetrahydrofolate + glycine + H2O = (6S)-5,6,7,8-tetrahydrofolate + L-serine. It functions in the pathway one-carbon metabolism; tetrahydrofolate interconversion. The protein operates within amino-acid biosynthesis; glycine biosynthesis; glycine from L-serine: step 1/1. Catalyzes the reversible interconversion of serine and glycine with tetrahydrofolate (THF) serving as the one-carbon carrier. This reaction serves as the major source of one-carbon groups required for the biosynthesis of purines, thymidylate, methionine, and other important biomolecules. Also exhibits THF-independent aldolase activity toward beta-hydroxyamino acids, producing glycine and aldehydes, via a retro-aldol mechanism. This Bacillus cereus (strain ATCC 10987 / NRS 248) protein is Serine hydroxymethyltransferase.